The primary structure comprises 564 residues: Asparagine synthetase domain-containing protein CG17486 (564 aa).

Cysteine 2 serves as the catalytic Nucleophile. Positions 2-180 constitute a Glutamine amidotransferase type-2 domain; that stretch reads CGIFCSVVNN…PLGLFRVKLN (179 aa). The Asparagine synthetase domain occupies 280–541; the sequence is PFCRLCMQKL…GLRDVVFLKK (262 aa).

This Drosophila melanogaster (Fruit fly) protein is Asparagine synthetase domain-containing protein CG17486.